The following is a 628-amino-acid chain: Serine/threonine-protein phosphatase 2A regulatory subunit psrA (628 aa).

A compositionally biased stretch (polar residues) spans 1 to 22 (MKNDHINYQQNLSQSPILNSNK). 3 disordered regions span residues 1–61 (MKND…QIPF), 500–558 (KKKQ…DKPS), and 577–628 (SSHR…YTFT). 2 stretches are compositionally biased toward low complexity: residues 23 to 58 (NQTQQNQQQQQQQQQQNPQQQQQFQHQQVPQLSPQQ) and 524 to 547 (QINQNNNNNNNNINNNNNNNNNNN). Residues 600–618 (NNHTNHDSEIENEVKEDFR) show a composition bias toward basic and acidic residues.

It belongs to the phosphatase 2A regulatory subunit B56 family. In terms of assembly, PP2A consists of a trimeric holoenzyme, composed of a 37 kDa catalytic subunit (C subunit) and a 65 kDa constant regulatory subunit (A subunit), that associates with a variety of regulatory subunits (B subunit) such as phr2AB (B55) and psrA (B56 homolog). The trimer may partially dissociates into a core 'AC' dimer equally active compared to the trimer. Seems to play a role in proper anterior patterning (pstO and pstAB).

It is found in the cytoplasm. Its subcellular location is the cytosol. In terms of biological role, involved in developmental cell fate decision. The protein is Serine/threonine-protein phosphatase 2A regulatory subunit psrA (psrA) of Dictyostelium discoideum (Social amoeba).